A 73-amino-acid chain; its full sequence is Translation initiation factor IF-1 1 (73 aa).

The 72-residue stretch at 1-72 (MAKEELIEFG…TKGRINFRHK (72 aa)) folds into the S1-like domain.

This sequence belongs to the IF-1 family. Component of the 30S ribosomal translation pre-initiation complex which assembles on the 30S ribosome in the order IF-2 and IF-3, IF-1 and N-formylmethionyl-tRNA(fMet); mRNA recruitment can occur at any time during PIC assembly.

The protein localises to the cytoplasm. Functionally, one of the essential components for the initiation of protein synthesis. Stabilizes the binding of IF-2 and IF-3 on the 30S subunit to which N-formylmethionyl-tRNA(fMet) subsequently binds. Helps modulate mRNA selection, yielding the 30S pre-initiation complex (PIC). Upon addition of the 50S ribosomal subunit IF-1, IF-2 and IF-3 are released leaving the mature 70S translation initiation complex. The chain is Translation initiation factor IF-1 1 from Cupriavidus pinatubonensis (strain JMP 134 / LMG 1197) (Cupriavidus necator (strain JMP 134)).